The sequence spans 82 residues: Small ribosomal subunit protein uS17 (82 aa).

This sequence belongs to the universal ribosomal protein uS17 family. As to quaternary structure, part of the 30S ribosomal subunit.

Functionally, one of the primary rRNA binding proteins, it binds specifically to the 5'-end of 16S ribosomal RNA. In Afipia carboxidovorans (strain ATCC 49405 / DSM 1227 / KCTC 32145 / OM5) (Oligotropha carboxidovorans), this protein is Small ribosomal subunit protein uS17.